The sequence spans 1769 residues: Tight junction protein 1 (1769 aa).

A PDZ 1 domain is found at 23–110 (TVTLHRAPGF…NAKITIRRKK (88 aa)). Residues 102–112 (AKITIRRKKKV) show a composition bias toward basic residues. Positions 102–188 (AKITIRRKKK…QPPKPTKVTL (87 aa)) are disordered. Acidic residues predominate over residues 123–135 (PVSENEDSYDEEV). Residue S125 is modified to Phosphoserine. Y131 is subject to Phosphotyrosine. Residues 148–174 (RRSEKSWARDRSASRERSLSPRSDRRS) show a composition bias toward basic and acidic residues. Residues S174, S177, and S178 each carry the phosphoserine modification. Residue T184 is modified to Phosphothreonine. A PDZ 2 domain is found at 185–263 (KVTLVKSRKN…KLKMVVQRDE (79 aa)). Residues S211 and S240 each carry the phosphoserine modification. T266 is subject to Phosphothreonine. Phosphoserine is present on residues S274, S276, S279, S283, S289, S293, S296, S299, S322, S328, S333, S336, and S352. The interval 295 to 362 (ASDHSGRSHD…TPVKHADDHT (68 aa)) is disordered. Over residues 298 to 326 (HSGRSHDRPPRHSRSRSPDQRSEPSDHSR) the composition is skewed to basic and acidic residues. Position 353 is a phosphothreonine (T353). A PDZ 3 domain is found at 420–501 (SMKLVKFRKG…GEEVTILAQK (82 aa)). Residues 515 to 583 (GDSFYIRTHF…PNKNRAEQLA (69 aa)) enclose the SH3 domain. The region spanning 609 to 790 (SKRNLRKSRE…WYGALKEAIQ (182 aa)) is the Guanylate kinase-like domain. S616 and S621 each carry phosphoserine. Residues 632–875 (YERVVLREAG…GTPPESAITR (244 aa)) form an occludin (OCLN)-binding region region. T808 bears the Phosphothreonine mark. 2 positions are modified to phosphoserine: S809 and S820. Y821 carries the phosphotyrosine modification. Phosphoserine occurs at positions 823, 827, and 836. Disordered regions lie at residues 824-976 (APGS…LRTP) and 1010-1067 (EMMR…SYTD). T845, T847, T853, T860, and T867 each carry phosphothreonine. Residues 878-891 (EPVREDSSGMHHEN) show a composition bias toward basic and acidic residues. Over residues 892-905 (QTYPPYSPQAQPQP) the composition is skewed to low complexity. S911 is modified (phosphoserine). Polar residues-rich tracts occupy residues 933–952 (PETN…TLTN) and 962–976 (PSTS…LRTP). The residue at position 967 (S967) is a Phosphoserine. S1070 carries the phosphoserine modification. Disordered stretches follow at residues 1091 to 1212 (SYYD…KAGH), 1224 to 1261 (PLIP…MKPQ), and 1273 to 1589 (KRSA…EFDS). Residues 1108 to 1124 (QHPRDLDSRQHPEESSE) are compositionally biased toward basic and acidic residues. S1138 carries the phosphoserine modification. Residues Y1139 and Y1164 each carry the phosphotyrosine modification. The actin-binding region (ABR) stretch occupies residues 1150–1370 (RTSTLRHEEQ…FDRRSFENKP (221 aa)). A compositionally biased stretch (basic and acidic residues) spans 1273–1286 (KRSASLENKKDENH). Positions 1300–1310 (PGAPIIGPKPT) are enriched in pro residues. Over residues 1335-1346 (PPEDIVRSNHYD) the composition is skewed to basic and acidic residues. Y1353 is subject to Phosphotyrosine. S1365 carries the phosphoserine modification. Over residues 1387 to 1401 (HSQNQTNFSSYSSKG) the composition is skewed to polar residues. Positions 1402 to 1419 (KSPEADAPDRSFGEKRYE) are enriched in basic and acidic residues. The residue at position 1412 (S1412) is a Phosphoserine. Polar residues-rich tracts occupy residues 1460–1471 (NSISLDFQNSLV) and 1514–1523 (AEQTQKTVTP). Basic and acidic residues predominate over residues 1539 to 1548 (PFERKFESPK). Residues S1546 and S1618 each carry the phosphoserine modification. Residues 1635-1769 (ATARGVFNNN…NCVSVLIDHF (135 aa)) form the ZU5 domain.

The protein belongs to the MAGUK family. In terms of assembly, homodimer. Forms heterodimers TJP3. Forms a heterodimer (via PDZ2 domain) with TJP2/ZO2 (via PDZ2 domain). Interacts with OCLN. Interacts with CALM, claudins, CGN/cingulin, CXADR, GJA12, GJD3 and UBN1. Interacts (via ZU5 domain) with CDC42BPB and MYZAP. Interacts (via PDZ domain) with GJA1. Interacts (via PDZ domains) with ANKRD2. Interacts with POPDC1 (via the C-terminus cytoplasmic tail). Interacts with HSPA4. Interacts with KIRREL1. Interacts with DLL1. Interacts with USP53 (via the C-terminal region). Interacts with DNMBP (via C-terminal domain); required for the apical cell-cell junction localization of DNMBP. Interacts with SPEF1. Interacts (via N-terminus) with CTNNA1. Interacts with CLDN18. Interacts with CLDN16 (via TRV motif); this is a prerequisite for anchoring of CLDN16 at the tight junction. Interacts with PKP1; the interaction facilitates TJP1/ZO-1 localization to the plasma membrane. Interacts with PATJ (via PDZ1-6 domains); the interaction is required for attachment and extension of TJP1/ZO1 condensates along the apical cell interface. In terms of processing, phosphorylated at tyrosine redidues in response to epidermal growth factor (EGF). This response is dependent on an intact actin microfilament system. Dephosphorylated by PTPRJ.

The protein resides in the cell membrane. It localises to the cell junction. It is found in the tight junction. Its subcellular location is the gap junction. In terms of biological role, TJP1, TJP2, and TJP3 are closely related scaffolding proteins that link tight junction (TJ) transmembrane proteins such as claudins, junctional adhesion molecules, and occludin to the actin cytoskeleton. Forms a multistranded TJP1/ZO1 condensate which elongates to form a tight junction belt, the belt is anchored at the apical cell membrane via interaction with PATJ. The tight junction acts to limit movement of substances through the paracellular space and as a boundary between the compositionally distinct apical and basolateral plasma membrane domains of epithelial and endothelial cells. Necessary for lumenogenesis, and particularly efficient epithelial polarization and barrier formation. Plays a role in the regulation of cell migration by targeting CDC42BPBb to the leading edge of migrating cells. With TJP2 and TJP3, participates in the junctional retention and stability of the transcription factor DBPA, but is not involved in its shuttling to the nucleus. May play a role in mediating cell morphology changes during ameloblast differentiation via its role in tight junctions. The protein is Tight junction protein 1 of Canis lupus familiaris (Dog).